Consider the following 431-residue polypeptide: MTSDCSSTHCSPESCGTASGCAPASSCSVETACLPGTCATSRCQTPSFLSRSRGLTGCLLPCYFTGSCNSPCLVGNCAWCEDGVFTSNEKETMQFLNDRLASYLEKVRSLEETNAELESRIQEQCEQDIPMVCPDYQRYFNTIEDLQQKILCTKAENSRLAVQLDNCKLATDDFKSKYESELSLRQLLEADISSLHGILEELTLCKSDLEAHVESLKEDLLCLKKNHEEEVNLLREQLGDRLSVELDTAPTLDLNRVLDEMRCQCETVLANNRREAEEWLAVQTEELNQQQLSSAEQLQGCQMEILELKRTASALEIELQAQQSLTESLECTVAETEAQYSSQLAQIQCLIDNLENQLAEIRCDLERQNQEYQVLLDVKARLEGEINTYWGLLDSEDSRLSCSPCSTTCTSSNTCEPCSAYVICTVENCCL.

Residues 1-89 are head; sequence MTSDCSSTHC…CEDGVFTSNE (89 aa). An IF rod domain is found at 89 to 400; the sequence is EKETMQFLND…GLLDSEDSRL (312 aa). Residues 90–124 form a coil 1A region; it reads KETMQFLNDRLASYLEKVRSLEETNAELESRIQEQ. The linker 1 stretch occupies residues 125–135; that stretch reads CEQDIPMVCPD. Positions 136 to 236 are coil 1B; the sequence is YQRYFNTIED…HEEEVNLLRE (101 aa). The tract at residues 237 to 252 is linker 12; the sequence is QLGDRLSVELDTAPTL. Residues 253-396 form a coil 2 region; sequence DLNRVLDEMR…NTYWGLLDSE (144 aa). Positions 397–431 are tail; sequence DSRLSCSPCSTTCTSSNTCEPCSAYVICTVENCCL.

This sequence belongs to the intermediate filament family. As to quaternary structure, heterotetramer of two type I and two type II keratins. As to expression, expressed in skin and scalp. Also very weakly expressed in tongue, breast, colon and small intestine. In the hair follicle, it is specifically present in the upper hair cuticle. Not present in the upper cortex (at protein level).

In terms of biological role, may play a role in late hair differentiation. The polypeptide is Keratin, type I cytoskeletal 40 (KRT40) (Homo sapiens (Human)).